A 706-amino-acid polypeptide reads, in one-letter code: Choline transporter-like protein 2 (706 aa).

Topologically, residues 1–33 (MGDERPHYYGKHGTPQKYDPTFKGPIYNRGCTD) are cytoplasmic. Phosphothreonine is present on Thr-14. Residues 34–54 (IICCVFLLLAIVGYVAVGIIA) traverse the membrane as a helical segment. At 55-232 (WTHGDPRKVI…RIFEDYTVSW (178 aa)) the chain is on the extracellular side. N-linked (GlcNAc...) asparagine glycosylation is found at Asn-187 and Asn-200. The helical transmembrane segment at 233-253 (YWIIIGLVIAMAMSLLFIILL) threads the bilayer. The Cytoplasmic segment spans residues 254-256 (RFL). The chain crosses the membrane as a helical span at residues 257 to 277 (AGIMVWVMIIMVILVLGYGIF). The Extracellular portion of the chain corresponds to 278-315 (HCYMEYSRLRGEAGSDVSLVDLGFQTDFRVYLHLRQTW). A helical transmembrane segment spans residues 316-336 (LAFMIILSILEVIIILLLIFL). Residues 337–364 (RKRILIAIALIKEASRAVGYVMCSLLYP) are Cytoplasmic-facing. A helical transmembrane segment spans residues 365–385 (LVTFFLLCLCIAYWASTAVFL). At 386–457 (STSNEAVYKI…FNAFMFFWLA (72 aa)) the chain is on the extracellular side. A glycan (N-linked (GlcNAc...) asparagine) is linked at Asn-417. A helical membrane pass occupies residues 458-480 (NFVLALGQVTLAGAFASYYWALR). The Cytoplasmic segment spans residues 481-504 (KPDDLPAFPLFSAFGRALRYHTGS). The helical transmembrane segment at 505-525 (LAFGALILAIVQIIRVILEYL) threads the bilayer. Residues 526-563 (DQRLKAAENKFAKCLMTCLKCCFWCLEKFIKFLNRNAY) lie on the Extracellular side of the membrane. The helical transmembrane segment at 564–584 (IMIAIYGTNFCTSARNAFFLL) threads the bilayer. Topologically, residues 585-599 (MRNIIRVAVLDKVTD) are cytoplasmic. A helical transmembrane segment spans residues 600–620 (FLFLLGKLLIVGSVGILAFFF). Residues 621-638 (FTHRIRIVQDTAPPLNYY) are Extracellular-facing. Residues 639–659 (WVPILTVIVGSYLIAHGFFSV) traverse the membrane as a helical segment. Residues 660-706 (YGMCVDTLFLCFLEDLERNDGSAERPYFMSSTLKKLLNKTNKKAAES) lie on the Cytoplasmic side of the membrane.

The protein belongs to the CTL (choline transporter-like) family. In terms of assembly, interacts with COCH. In terms of tissue distribution, present in supporting cells of the inner ear (at protein level). As to expression, expressed in inner ear vestibular tissue.

It localises to the cell membrane. The protein resides in the mitochondrion outer membrane. It carries out the reaction choline(out) + n H(+)(in) = choline(in) + n H(+)(out). The enzyme catalyses ethanolamine(out) + n H(+)(in) = ethanolamine(in) + n H(+)(out). Its function is as follows. Choline/H+ antiporter, mainly in mitochodria. Also acts as a low-affinity ethanolamine/H+ antiporter, regulating the supply of extracellular ethanolamine (Etn) for the CDP-Etn pathway, redistribute intracellular Etn and balance the CDP-Cho and CDP-Etn arms of the Kennedy pathway. Functionally, does not exhibit choline transporter activity. In Homo sapiens (Human), this protein is Choline transporter-like protein 2.